We begin with the raw amino-acid sequence, 169 residues long: Phosphopantetheine adenylyltransferase (169 aa).

Residue S8 coordinates substrate. ATP contacts are provided by residues 8-9 (SF) and H16. K40, T72, and R86 together coordinate substrate. Residues 87–89 (GLR), E97, and 122–128 (YSFLSSS) each bind ATP.

It belongs to the bacterial CoaD family. In terms of assembly, homohexamer. It depends on Mg(2+) as a cofactor.

The protein localises to the cytoplasm. The enzyme catalyses (R)-4'-phosphopantetheine + ATP + H(+) = 3'-dephospho-CoA + diphosphate. The protein operates within cofactor biosynthesis; coenzyme A biosynthesis; CoA from (R)-pantothenate: step 4/5. In terms of biological role, reversibly transfers an adenylyl group from ATP to 4'-phosphopantetheine, yielding dephospho-CoA (dPCoA) and pyrophosphate. The protein is Phosphopantetheine adenylyltransferase of Cyanothece sp. (strain PCC 7425 / ATCC 29141).